Reading from the N-terminus, the 90-residue chain is MALNLEKKQEIIKAFATKENDTGSCEVQVALLNERIKLLTEHLKANPKDHSSRLGLLKLVAQRRNLLKYIKRTNHARYVVLIEKLGIKDR.

The protein belongs to the universal ribosomal protein uS15 family. Part of the 30S ribosomal subunit. Forms a bridge to the 50S subunit in the 70S ribosome, contacting the 23S rRNA.

Its function is as follows. One of the primary rRNA binding proteins, it binds directly to 16S rRNA where it helps nucleate assembly of the platform of the 30S subunit by binding and bridging several RNA helices of the 16S rRNA. Functionally, forms an intersubunit bridge (bridge B4) with the 23S rRNA of the 50S subunit in the ribosome. This is Small ribosomal subunit protein uS15 from Helicobacter pylori (strain HPAG1).